Here is a 341-residue protein sequence, read N- to C-terminus: Guanine nucleotide-binding protein subunit beta (341 aa).

WD repeat units lie at residues 54-84 (GHLAKIYAMHWASDSRNLVSASQDGKLIVWD), 96-126 (LRSSWVMTCAYAPSGNYVACGGLDNICSIYS), 142-171 (GHTGYLSCCRFIDDNQIVTSSGDMTCALWN), 183-213 (GHTGDVMSLSLAPDMRTFVSGACDASAKLFD), 225-255 (GHESDINAITYFPNGFAFATGSDDATCRLFD), 269-299 (NIICGITSVAFSKSGRLLLGGYDDFNCNVWD), and 311-341 (GHDNRVSCLGVTEDGMAVATGSWDSFLKIWN).

The protein belongs to the WD repeat G protein beta family. As to quaternary structure, g proteins are composed of 3 units, alpha, beta and gamma.

Its function is as follows. Guanine nucleotide-binding proteins (G proteins) are involved as a modulator or transducer in various transmembrane signaling systems. The beta and gamma chains are required for the GTPase activity, for replacement of GDP by GTP, and for G protein-effector interaction. The sequence is that of Guanine nucleotide-binding protein subunit beta from Loligo forbesii (Veined squid).